We begin with the raw amino-acid sequence, 797 residues long: Discoidin domain-containing receptor tyrosine kinase B (797 aa).

The N-terminal stretch at 1–19 is a signal peptide; sequence MKLLLYLFGVTFHSNTVVA. The Extracellular segment spans residues 20–384; sequence LELRECSHQL…VTEHDDGTSM (365 aa). Residues 25–181 form the F5/8 type C domain; the sequence is CSHQLGMSNR…VCMRVEVFGC (157 aa). An intrachain disulfide couples C25 to C181. Residues 46–66 are disordered; that stretch reads SFDLQSTGPQHARAHQESGSG. N141, N167, N264, and N353 each carry an N-linked (GlcNAc...) asparagine glycan. Residues 385-405 traverse the membrane as a helical segment; the sequence is FAFIIFFFMFLIVAVIILTVL. Residues 406 to 797 lie on the Cytoplasmic side of the membrane; it reads YRKREYRVKA…LVHTSPHIHF (392 aa). One can recognise a Protein kinase domain in the interval 527-785; the sequence is LICVSRIGQG…PSFENVHLHL (259 aa). Residues 533–541 and K554 each bind ATP; that span reads IGQGEFGEV. Catalysis depends on D645, which acts as the Proton acceptor.

It belongs to the protein kinase superfamily. Tyr protein kinase family. Insulin receptor subfamily. Interacts with shc-1. Post-translationally, autophosphorylated on tyrosine residues. N-glycosylation at Asn-141 is required for axon regeneration after injury but is dispensable for kinase activity and axon localization. Expressed in some neurons in head and tail, some motoneurons in ventral nerve cord, in PVP interneurons, seam cells, rectal gland cells, vulva cells and some non-neuronal cells in the tail. Expressed in D-type motor neurons.

The protein localises to the cell membrane. It is found in the cell projection. The protein resides in the axon. It localises to the perikaryon. It carries out the reaction L-tyrosyl-[protein] + ATP = O-phospho-L-tyrosyl-[protein] + ADP + H(+). Its function is as follows. Tyrosine-protein kinase receptor which, together with ddr-1, is involved in axon guidance to establish the tracts for the ventral and dorsal nerve cords during nervous system development. Acts upstream of the adapter shc-1, and the tyrosine kinase receptors svh-1 and svh-2 to regulate axon regeneration following injury in D-type motor neurons. May mediate axon regeneration in association with the collagen emb-9. The protein is Discoidin domain-containing receptor tyrosine kinase B of Caenorhabditis elegans.